Consider the following 570-residue polypeptide: Transmembrane 7 superfamily member 3 (570 aa).

The signal sequence occupies residues 1–21 (MGFLQLLVVAVLASEHRVAGA). N-linked (GlcNAc...) asparagine glycans are attached at residues Asn27, Asn61, Asn75, Asn87, and Asn264. 7 consecutive transmembrane segments (helical) span residues 296-313 (VFFT…FFGH), 320-342 (LFFI…LTPI), 347-369 (NLIL…WWRF), 371-393 (ILSI…VTFF), 408-430 (FWVT…LRIL), 437-459 (VIGS…SYIT), and 479-501 (PFQT…GITL).

Widely expressed. Highly expressed in kidney and pancreas.

Its subcellular location is the cell membrane. Functionally, involved in the inhibition of cytokine-induced death of pancreatic beta cells. Involved in the promotion of insulin secretion from pancreatic beta cells. Is a downstream transcriptional target of p53/TP53, and acts as a pro-survival homeostatic factor that attenuates the development of cellular stress. Maintains protein homeostasis and promotes cell survival through attenuation of endoplasmic reticulum (ER) stress and the subsequent induction of unfolded protein response (UPR). This chain is Transmembrane 7 superfamily member 3 (TM7SF3), found in Homo sapiens (Human).